The sequence spans 92 residues: Nodulation protein F (92 aa).

One can recognise a Carrier domain in the interval 4–88 (QLTVEIIAAI…DVVEAVRGLI (85 aa)). S45 carries the O-(pantetheine 4'-phosphoryl)serine modification.

Post-translationally, 4'-phosphopantetheine is transferred from CoA to a specific serine of apo-NodF.

In terms of biological role, proposed to synthesize nod factor fatty acyl chain. Involved in trans-2,trans-4,trans-6,cis-11-octadecatetraenoic acid biosynthesis. The chain is Nodulation protein F (nodF) from Rhizobium leguminosarum bv. trifolii.